The primary structure comprises 477 residues: Ankyrin repeat, SAM and basic leucine zipper domain-containing protein 1 (477 aa).

Phosphoserine occurs at positions 17, 18, and 20. ANK repeat units follow at residues 46 to 76 (EKKEKFKKALTTGDVSLVLELLDSGIISVDA), 80 to 109 (YGWTPLMYAASVANAELVRVLLDRGANASF), 112 to 146 (DKQTILITACSAHGSEEQILKCVELLLSRNADPNV), 150 to 179 (RLMTPIMYAARDGHTQVVALLVASGAEVNT), 183 to 212 (NGYTALTWAARQGHKSIVLKLLELGANKML), and 216 to 245 (DGKLPSEIAKRNKHHEIFNLLTFTLNPLEG). Residues 274–336 (SYAAFGDLEV…KILAALKELE (63 aa)) form the SAM domain.

Interacts with DDX4, PIWIL1, RANBP9 and TDRD1.

Its subcellular location is the cytoplasm. Functionally, plays a central role during spermatogenesis by repressing transposable elements and preventing their mobilization, which is essential for the germline integrity. Acts via the piRNA metabolic process, which mediates the repression of transposable elements during meiosis by forming complexes composed of piRNAs and Piwi proteins and governs the methylation and subsequent repression of transposons. Its association with pi-bodies suggests a participation in the primary piRNAs metabolic process. Required prior to the pachytene stage to facilitate the production of multiple types of piRNAs, including those associated with repeats involved in the regulation of retrotransposons. May act by mediating protein-protein interactions during germ cell maturation. This chain is Ankyrin repeat, SAM and basic leucine zipper domain-containing protein 1 (ASZ1), found in Callithrix jacchus (White-tufted-ear marmoset).